Here is an 860-residue protein sequence, read N- to C-terminus: DNA mismatch repair protein MutS (860 aa).

607–614 is an ATP binding site; that stretch reads GPNMSGKS.

Belongs to the DNA mismatch repair MutS family.

In terms of biological role, this protein is involved in the repair of mismatches in DNA. It is possible that it carries out the mismatch recognition step. This protein has a weak ATPase activity. The protein is DNA mismatch repair protein MutS of Listeria monocytogenes serotype 4b (strain CLIP80459).